The following is a 480-amino-acid chain: Cysteine--tRNA ligase (480 aa).

A Zn(2+)-binding site is contributed by Cys-29. Residues 31–41 (PTVYADPHLGH) carry the 'HIGH' region motif. Residues Cys-220, His-245, and Glu-249 each contribute to the Zn(2+) site. The 'KMSKS' region motif lies at 276-280 (KMAKS). Position 279 (Lys-279) interacts with ATP.

The protein belongs to the class-I aminoacyl-tRNA synthetase family. In terms of assembly, monomer. Requires Zn(2+) as cofactor.

It is found in the cytoplasm. It carries out the reaction tRNA(Cys) + L-cysteine + ATP = L-cysteinyl-tRNA(Cys) + AMP + diphosphate. This is Cysteine--tRNA ligase from Thermus thermophilus (strain ATCC 27634 / DSM 579 / HB8).